Consider the following 324-residue polypeptide: MSVVILGTGSCLPEKIVTNKDLEKIVETNDEWIRTRTGICERRIAGPGEQAYILASRAAKNALDAAGLVAEDLDMIVVGTISAHMVMPSCACMIQQEIGAKKAFAFDVNAACSGFLYAMEVGSKYVATNPAMKVLCIGTETLSARTNQQDRNTSIIFADGAGAAVIGYEEGDRGILASKLFSDGSFGDILFLSGSESTNTDLRLGEYEGSHIHMEGREVFKHAVRAMEGAVNTIMEEVGVSPHEIKLLIPHQANIRIIKNLGERLGLSSEQVFVNIANYGNTSAASVPIALDEAVRGGKIESGDLVLLCSFGGGFTWGASLIRW.

Active-site residues include C112 and H251. Residues 252–256 are ACP-binding; that stretch reads QANIR. The active site involves N281.

The protein belongs to the thiolase-like superfamily. FabH family. Homodimer.

It localises to the cytoplasm. The enzyme catalyses malonyl-[ACP] + acetyl-CoA + H(+) = 3-oxobutanoyl-[ACP] + CO2 + CoA. It participates in lipid metabolism; fatty acid biosynthesis. Its function is as follows. Catalyzes the condensation reaction of fatty acid synthesis by the addition to an acyl acceptor of two carbons from malonyl-ACP. Catalyzes the first condensation reaction which initiates fatty acid synthesis and may therefore play a role in governing the total rate of fatty acid production. Possesses both acetoacetyl-ACP synthase and acetyl transacylase activities. Its substrate specificity determines the biosynthesis of branched-chain and/or straight-chain of fatty acids. The protein is Beta-ketoacyl-[acyl-carrier-protein] synthase III of Desulfotalea psychrophila (strain LSv54 / DSM 12343).